We begin with the raw amino-acid sequence, 680 residues long: DNA-directed RNA polymerase subunit beta' (680 aa).

Positions 68, 70, 86, and 89 each coordinate Zn(2+). Residues aspartate 488, aspartate 490, and aspartate 492 each coordinate Mg(2+).

The protein belongs to the RNA polymerase beta' chain family. RpoC1 subfamily. As to quaternary structure, in plastids the minimal PEP RNA polymerase catalytic core is composed of four subunits: alpha, beta, beta', and beta''. When a (nuclear-encoded) sigma factor is associated with the core the holoenzyme is formed, which can initiate transcription. Requires Mg(2+) as cofactor. Zn(2+) serves as cofactor.

Its subcellular location is the plastid. The protein resides in the chloroplast. It catalyses the reaction RNA(n) + a ribonucleoside 5'-triphosphate = RNA(n+1) + diphosphate. In terms of biological role, DNA-dependent RNA polymerase catalyzes the transcription of DNA into RNA using the four ribonucleoside triphosphates as substrates. The sequence is that of DNA-directed RNA polymerase subunit beta' from Nicotiana tabacum (Common tobacco).